Here is a 676-residue protein sequence, read N- to C-terminus: E3 ubiquitin-protein ligase ICP0 (676 aa).

Residues 13 to 52 (CCICLDAITGAARALPCLHAFCLACIRRWLEGRPTCPLCK) form an RING-type zinc finger. Disordered stretches follow at residues 101–135 (DLTA…EAAG), 266–486 (HLIP…PAPI), and 555–676 (AAIS…AWRQ). The span at 110–135 (PGAGGEAGAAGGSEAGGGAGGAEAAG) shows a compositional bias: gly residues. The segment covering 286 to 303 (SDSDSEGSEDDSWSESEE) has biased composition (acidic residues). Low complexity predominate over residues 304-314 (SSSGLSTSDLT). Residues 315 to 328 (AIDDTETEPETDAE) show a composition bias toward acidic residues. A compositionally biased stretch (polar residues) spans 351–361 (YVSTRGRQTPA). 2 stretches are compositionally biased toward low complexity: residues 375 to 388 (GRAA…SSRS) and 397 to 411 (LPAA…QARA). Residues 422–439 (GAGLGVAAGETAGWGVGS) show a composition bias toward gly residues. Residues 440 to 450 (EEGRGERRAKL) are compositionally biased toward basic and acidic residues. Residues 474–484 (TPAPAPAPAPA) are compositionally biased toward pro residues. A compositionally biased stretch (low complexity) spans 555–597 (AAISTRAPTPSPAGRAPAADPRRAGAPALAGAARAEAGRNGNP).

In terms of processing, auto-ubiquitinated. Post-translationally, the strongly acidic region might serve as a transcriptional activation domain, possibly regulated through phosphorylation by casein kinase II.

It catalyses the reaction S-ubiquitinyl-[E2 ubiquitin-conjugating enzyme]-L-cysteine + [acceptor protein]-L-lysine = [E2 ubiquitin-conjugating enzyme]-L-cysteine + N(6)-ubiquitinyl-[acceptor protein]-L-lysine.. Functionally, evades nuclear antiviral defenses triggered by dsDNA viruses. Acts during the initial stages of lytic infection and the reactivation of latent viral genome. Prevents the antiviral effect of nuclear bodies by degrading host PML and SP100. The protein is E3 ubiquitin-protein ligase ICP0 (BICP0) of Bos taurus (Bovine).